The primary structure comprises 585 residues: Testis-specific serine kinase substrate (585 aa).

Residues 91–108 show a composition bias toward low complexity; the sequence is EPDSSGTDSTTEDSGPLA. Residues 91 to 126 are disordered; the sequence is EPDSSGTDSTTEDSGPLALPGPPASPTTPWAPEDPD. Phosphoserine is present on residues Ser224, Ser281, and Ser309. Disordered stretches follow at residues 262–309 and 559–585; these read SRHG…PSLS and LEGS…GSEQ.

Phosphorylated on serine residue(s) by STK22A/TSSK1 and STK22B/TSSK2.

It localises to the cytoplasm. Its subcellular location is the cytoskeleton. The protein localises to the microtubule organizing center. It is found in the centrosome. The protein resides in the centriole. In terms of biological role, may play a role in testicular physiology, most probably in the process of spermatogenesis or spermatid development. This Rattus norvegicus (Rat) protein is Testis-specific serine kinase substrate (Tsks).